We begin with the raw amino-acid sequence, 103 residues long: Large ribosomal subunit protein uL24 (103 aa).

This sequence belongs to the universal ribosomal protein uL24 family. Part of the 50S ribosomal subunit.

In terms of biological role, one of two assembly initiator proteins, it binds directly to the 5'-end of the 23S rRNA, where it nucleates assembly of the 50S subunit. One of the proteins that surrounds the polypeptide exit tunnel on the outside of the subunit. The polypeptide is Large ribosomal subunit protein uL24 (Brucella ovis (strain ATCC 25840 / 63/290 / NCTC 10512)).